Reading from the N-terminus, the 213-residue chain is Andrastin A biosynthesis cluster protein B (213 aa).

In terms of biological role, part of the gene cluster that mediates the biosynthesis of andrastins, meroterpenoid compounds that exhibit inhibitory activity against ras farnesyltransferase, suggesting that they could be promising leads for antitumor agents. The first step of the pathway is the synthesis of 3,5-dimethylorsellinic acid (DMOA) by the polyketide synthase adrD via condensation of one acetyl-CoA starter unit with 3 malonyl-CoA units and 2 methylations. DMAO is then converted to farnesyl-DMAO by the prenyltransferase adrG. The methyltransferase adrK catalyzes the methylation of the carboxyl group of farnesyl-DMAO to farnesyl-DMAO methyl ester which is further converted to epoxyfarnesyl-DMAO methyl ester by the FAD-dependent monooxygenase adrH. The terpene cyclase adrI then catalyzes the carbon skeletal rearrangement to generate the andrastin E, the first compound in the pathway having the andrastin scaffold, with the tetracyclic ring system. The post-cyclization tailoring enzymes adrF, adrE, adrJ, and adrA, are involved in the conversion of andrastin E into andrastin A. The short chain dehydrogenase adrF is responsible for the oxidation of the C-3 a hydroxyl group of andrastin E to yield the corresponding ketone, andrastin D. The ketoreductase adrE stereoselectively reduces the carbonyl moiety to reverse the stereochemistry of the C-3 position to yield andrastin F. The acetyltransferase adrJ is the acetyltransferase that attaches the acetyl group to the C-3 hydroxyl group of andrastin F to yield andrastin C. Finally, the cytochrome P450 monooxygenase adrA catalyzes two sequential oxidation reactions of the C-23 methyl group, to generate the corresponding alcohol andrastin B, and aldehyde andrastin A. In Penicillium rubens (strain ATCC 28089 / DSM 1075 / NRRL 1951 / Wisconsin 54-1255) (Penicillium chrysogenum), this protein is Andrastin A biosynthesis cluster protein B.